The sequence spans 531 residues: MRLQFKLLGFLTLLGTSTILSACAATQPNFEPNNIEESGPITPTTPTTDVPKPTAEVVPVNRGFHFQTNKVPSESDVFKHNYDLTFSLNFTNKSNDIYGTGWLFDWKGDEKALGIDGSFVPSITSNIDNSLLKDDQFTVYLATNLHVADALRNDQDYEPYKKDQNKQDFTENTKTEFFSLGKYLEGEQLKQYISKEENQSANQTDKALVSIQASNIPKTAYTATDFVDMNSYSYNNITTSLPGNYADFAVIEVNLNLKNQRDQQILHDFVKPAIKAYKALGDTLELFSAKPLNQFIEQNYYLLGYPVINKGNNTANLLLAQQKSFDHNNSDHNQKSQWFTKDQSYINKLDRIPVLTNNYRAYNESTGSQLFANQQNESWLNGVVIQDKGVVNFASFSNFTLKYHEKRFQQYGYGLMLNDTNFPGGSSGSPLIGKDNKLNSIYFGVLEIYQSGSLARNDIGMSQILRTPQNDKGSSISKGSYDLIFGDKNTKNYYAKFAKDHQTHLYQKIKESKDEQFRFVETQETTNNLGN.

The N-terminal stretch at 1-22 is a signal peptide; sequence MRLQFKLLGFLTLLGTSTILSA. Cysteine 23 carries the N-palmitoyl cysteine lipid modification. Residue cysteine 23 is the site of S-diacylglycerol cysteine attachment. Positions 31–51 are disordered; sequence EPNNIEESGPITPTTPTTDVP. Residues 40–51 show a composition bias toward low complexity; that stretch reads PITPTTPTTDVP.

It belongs to the MG067/MG068/MG395 family.

It localises to the cell membrane. This is an uncharacterized protein from Mycoplasma pneumoniae (strain ATCC 29342 / M129 / Subtype 1) (Mycoplasmoides pneumoniae).